The following is a 248-amino-acid chain: MILFPAIDLKDGQCVRLKLGDMEQATVYNSDPAAQARAFEEQGFEWLHVVDLNGAFAGETVNGDAVDAILRATKNPVQLGGGIRTLDHIENWLARGLKRVILGTVAVRDPALVIEACRKFPGRIAVGIDAKGGKVAVEGWAEASELGVIELARRFEGAGVAAIIYTDIDRDGILTGINWAATLELSDAVSIPVIASGGLASLDDIRRMTEPEAQKLEGAISGRALYDGRIDPKEALDLIREARKGMIR.

Residue Asp-8 is the Proton acceptor of the active site. Residue Asp-129 is the Proton donor of the active site.

This sequence belongs to the HisA/HisF family.

It localises to the cytoplasm. It carries out the reaction 1-(5-phospho-beta-D-ribosyl)-5-[(5-phospho-beta-D-ribosylamino)methylideneamino]imidazole-4-carboxamide = 5-[(5-phospho-1-deoxy-D-ribulos-1-ylimino)methylamino]-1-(5-phospho-beta-D-ribosyl)imidazole-4-carboxamide. The protein operates within amino-acid biosynthesis; L-histidine biosynthesis; L-histidine from 5-phospho-alpha-D-ribose 1-diphosphate: step 4/9. The polypeptide is 1-(5-phosphoribosyl)-5-[(5-phosphoribosylamino)methylideneamino] imidazole-4-carboxamide isomerase (Sinorhizobium medicae (strain WSM419) (Ensifer medicae)).